The sequence spans 622 residues: Low affinity potassium transport system protein Kup (622 aa).

The next 12 helical transmembrane spans lie at 9 to 29 (LPAV…TSPL), 49 to 69 (VFGF…LKYL), 101 to 121 (VLVI…VITP), 137 to 157 (PAMD…LFII), 165 to 185 (VGKL…VLGV), 212 to 232 (AVSF…EALY), 247 to 267 (WFTV…ALLL), 276 to 296 (PFFL…ATLA), 337 to 357 (IYIP…IVSF), 363 to 383 (LAAA…ILFC), 397 to 417 (AWVL…ANVV), and 419 to 439 (ILSG…IMTT).

Belongs to the HAK/KUP transporter (TC 2.A.72) family.

The protein localises to the cell inner membrane. It carries out the reaction K(+)(in) + H(+)(in) = K(+)(out) + H(+)(out). In terms of biological role, responsible for the low-affinity transport of potassium into the cell. Likely operates as a K(+):H(+) symporter. The protein is Low affinity potassium transport system protein Kup of Pectobacterium atrosepticum (strain SCRI 1043 / ATCC BAA-672) (Erwinia carotovora subsp. atroseptica).